We begin with the raw amino-acid sequence, 41 residues long: Large ribosomal subunit protein bL36 (41 aa).

It belongs to the bacterial ribosomal protein bL36 family.

This is Large ribosomal subunit protein bL36 from Orientia tsutsugamushi (strain Boryong) (Rickettsia tsutsugamushi).